A 505-amino-acid chain; its full sequence is MSQQDKKLTGVFGHPVSDRENSMTAGPRGPLLMQDIYFLEQMSQFDREVIPERRMHAKGSGAFGTFTVTKDITKYTNAKIFSEIGKQTEMFARFSTVAGERGAADAERDIRGFALKFYTEEGNWDLVGNNTPVFFFRDPKLFVSLNRAVKRDPRTNMRDAQNNWDFWTGLPEALHQVTILMSDRGIPKDLRHMHGFGSHTYSMYNDSGERVWVKFHFRTQQGIENLTDEEAAEIIATDRDSSQRDLFEAIEKGDYPKWTMYIQVMTEEQAKNHKDNPFDLTKVWYHDEYPLIEVGEFELNRNPDNYFTDVEQAAFAPTNIIPGLDFSPDKMLQGRLFSYGDAQRYRLGVNHWQIPVNQPKGVGIENICPFSRDGQMRVVDNNQGGGTHHYPNNHGKFDSQPEYKKPPFPTDGYGYEYNQRQDDDNYFEQPGKLFRLQSEDAKERIFTNTANAMEGVTDDVKRRHIRHCYKADPEYGKGVAKALGIDINSIDLETENDETYENFEK.

The tract at residues 1 to 25 is disordered; it reads MSQQDKKLTGVFGHPVSDRENSMTA. Residues H56 and N129 contribute to the active site. Y339 serves as a coordination point for heme.

Belongs to the catalase family. Homodimer. It depends on heme as a cofactor.

The catalysed reaction is 2 H2O2 = O2 + 2 H2O. Functionally, decomposes hydrogen peroxide into water and oxygen; serves to protect cells from the toxic effects of hydrogen peroxide. This Staphylococcus aureus protein is Catalase (katA).